Consider the following 144-residue polypeptide: UPF0547 protein C16orf87 homolog (144 aa).

The interval 33–112 (HAKQSQRLPP…EEKEKQEKEV (80 aa)) is disordered. The segment covering 35 to 45 (KQSQRLPPTSE) has biased composition (polar residues). Basic residues predominate over residues 50–62 (PKRRRTERIKRER). Composition is skewed to basic and acidic residues over residues 63–74 (IHTAVNRDLENR) and 99–112 (KKHE…EKEV). Residues 94-122 (KTATTKKHEEEKEKQEKEVDMYANLSDEK) adopt a coiled-coil conformation.

It belongs to the UPF0547 family.

This Xenopus laevis (African clawed frog) protein is UPF0547 protein C16orf87 homolog.